Consider the following 290-residue polypeptide: tRNA (guanine-N(7)-)-methyltransferase (290 aa).

2 stretches are compositionally biased toward basic and acidic residues: residues 1–12 (MSDSLHTPEEPR) and 20–43 (AHAH…DGPK). Residues 1–49 (MSDSLHTPEEPRPGPGEQLAHAHDGSLRHTRAKGEPRFPDGPKADPAGS) are disordered. The S-adenosyl-L-methionine site is built by Glu104, Asp129, Asp156, and Asp179. Asp179 is a catalytic residue. Substrate is bound by residues Lys183, Asp215, and 252 to 255 (TRFE).

The protein belongs to the class I-like SAM-binding methyltransferase superfamily. TrmB family.

It catalyses the reaction guanosine(46) in tRNA + S-adenosyl-L-methionine = N(7)-methylguanosine(46) in tRNA + S-adenosyl-L-homocysteine. The protein operates within tRNA modification; N(7)-methylguanine-tRNA biosynthesis. In terms of biological role, catalyzes the formation of N(7)-methylguanine at position 46 (m7G46) in tRNA. The chain is tRNA (guanine-N(7)-)-methyltransferase from Streptomyces avermitilis (strain ATCC 31267 / DSM 46492 / JCM 5070 / NBRC 14893 / NCIMB 12804 / NRRL 8165 / MA-4680).